We begin with the raw amino-acid sequence, 433 residues long: Ribonuclease T2-like (433 aa).

4 disulfides stabilise this stretch: Cys-28/Cys-47, Cys-36/Cys-95, Cys-46/Cys-171, and Cys-103/Cys-163. Asn-38 and Asn-71 each carry an N-linked (GlcNAc...) asparagine glycan. Residues His-88, Glu-156, and His-160 contribute to the active site. Asn-221 and Asn-263 each carry an N-linked (GlcNAc...) asparagine glycan. A disulfide bridge connects residues Cys-247 and Cys-283.

Belongs to the RNase T2 family.

It localises to the vacuole lumen. Its subcellular location is the cytoplasm. It carries out the reaction a ribonucleotidyl-ribonucleotide-RNA + H2O = a 3'-end 3'-phospho-ribonucleotide-RNA + a 5'-end dephospho-ribonucleoside-RNA + H(+). Its function is as follows. Rnase which modulates cell survival under stress conditions. Released from the vacuole to the cytoplasm during stress to promote tRNA and rRNA cleavage and to activate separately a downstream pathway that promotes cell death. Involved in cell size, vacuolar morphology and growth at high temperatures and high salt concentration. This Candida glabrata (strain ATCC 2001 / BCRC 20586 / JCM 3761 / NBRC 0622 / NRRL Y-65 / CBS 138) (Yeast) protein is Ribonuclease T2-like (RNY1).